The chain runs to 221 residues: Epididymal secretory glutathione peroxidase (221 aa).

The signal sequence occupies residues 1-21; that stretch reads MVTELRVFYLVPLLLASYVQT. Residue Cys73 is part of the active site.

This sequence belongs to the glutathione peroxidase family. As to expression, epididymis.

Its subcellular location is the secreted. The catalysed reaction is 2 glutathione + H2O2 = glutathione disulfide + 2 H2O. Its function is as follows. Protects cells and enzymes from oxidative damage, by catalyzing the reduction of hydrogen peroxide, lipid peroxides and organic hydroperoxide, by glutathione. May constitute a glutathione peroxidase-like protective system against peroxide damage in sperm membrane lipids. The chain is Epididymal secretory glutathione peroxidase (Gpx5) from Mus musculus (Mouse).